A 101-amino-acid polypeptide reads, in one-letter code: Chaperone modulatory protein CbpM (101 aa).

It belongs to the CbpM family.

In terms of biological role, interacts with CbpA and inhibits both the DnaJ-like co-chaperone activity and the DNA binding activity of CbpA. Together with CbpA, modulates the activity of the DnaK chaperone system. Does not inhibit the co-chaperone activity of DnaJ. The chain is Chaperone modulatory protein CbpM from Salmonella arizonae (strain ATCC BAA-731 / CDC346-86 / RSK2980).